Here is a 386-residue protein sequence, read N- to C-terminus: Mannitol-1-phosphate 5-dehydrogenase (386 aa).

Residue 3-14 (AVHFGAGNIGRG) coordinates NAD(+).

It belongs to the mannitol dehydrogenase family.

The enzyme catalyses D-mannitol 1-phosphate + NAD(+) = beta-D-fructose 6-phosphate + NADH + H(+). This Brevibacillus brevis (strain 47 / JCM 6285 / NBRC 100599) protein is Mannitol-1-phosphate 5-dehydrogenase.